The primary structure comprises 131 residues: Small ribosomal subunit protein uS10m (131 aa).

The protein belongs to the universal ribosomal protein uS10 family.

It is found in the mitochondrion. The polypeptide is Small ribosomal subunit protein uS10m (mrps10) (Dictyostelium discoideum (Social amoeba)).